A 261-amino-acid polypeptide reads, in one-letter code: tRNA pseudouridine synthase A (261 aa).

The Nucleophile role is filled by aspartate 51. Tyrosine 109 serves as a coordination point for substrate.

It belongs to the tRNA pseudouridine synthase TruA family. In terms of assembly, homodimer.

It carries out the reaction uridine(38/39/40) in tRNA = pseudouridine(38/39/40) in tRNA. Functionally, formation of pseudouridine at positions 38, 39 and 40 in the anticodon stem and loop of transfer RNAs. This chain is tRNA pseudouridine synthase A, found in Methylobacillus flagellatus (strain ATCC 51484 / DSM 6875 / VKM B-1610 / KT).